The following is a 437-amino-acid chain: Serine hydroxymethyltransferase 1 (437 aa).

(6S)-5,6,7,8-tetrahydrofolate is bound by residues Leu-132 and 136–138 (GHL). Position 241 is an N6-(pyridoxal phosphate)lysine (Lys-241).

The protein belongs to the SHMT family. Homodimer. Pyridoxal 5'-phosphate serves as cofactor.

It localises to the cytoplasm. The enzyme catalyses (6R)-5,10-methylene-5,6,7,8-tetrahydrofolate + glycine + H2O = (6S)-5,6,7,8-tetrahydrofolate + L-serine. It participates in one-carbon metabolism; tetrahydrofolate interconversion. The protein operates within amino-acid biosynthesis; glycine biosynthesis; glycine from L-serine: step 1/1. In terms of biological role, catalyzes the reversible interconversion of serine and glycine with tetrahydrofolate (THF) serving as the one-carbon carrier. This reaction serves as the major source of one-carbon groups required for the biosynthesis of purines, thymidylate, methionine, and other important biomolecules. Also exhibits THF-independent aldolase activity toward beta-hydroxyamino acids, producing glycine and aldehydes, via a retro-aldol mechanism. The protein is Serine hydroxymethyltransferase 1 of Mesorhizobium japonicum (strain LMG 29417 / CECT 9101 / MAFF 303099) (Mesorhizobium loti (strain MAFF 303099)).